We begin with the raw amino-acid sequence, 397 residues long: Decapping and exoribonuclease protein (397 aa).

The segment covering 1–10 (MEPRGTKRKA) has biased composition (basic residues). The tract at residues 1–30 (MEPRGTKRKAEKTEVEKPLNKLPRAVPSLR) is disordered. Residues Arg58, Glu101, and 131-133 (WRG) each bind substrate. Met185 is a binding site for adenosine 3',5'-bisphosphate. Glu192 serves as a coordination point for Mg(2+). Cys217 and Glu234 together coordinate substrate. 4 residues coordinate Mg(2+): Glu234, Asp236, Glu253, and Leu254. Position 236 (Asp236) interacts with adenosine 3',5'-bisphosphate. The segment at 253-256 (ELKT) is adenosine 3',5'-bisphosphate; inhibitor. 2 residues coordinate substrate: Lys255 and Gln280. Gln280 contacts adenosine 3',5'-bisphosphate. Thr392 is modified (phosphothreonine). Phosphoserine is present on Ser394.

The protein belongs to the DXO/Dom3Z family. Mg(2+) is required as a cofactor.

It localises to the nucleus. The enzyme catalyses a 5'-end triphospho-ribonucleoside in mRNA + H2O = a 5'-end phospho-ribonucleoside in mRNA + diphosphate + H(+). It carries out the reaction a 5'-end NAD(+)-phospho-ribonucleoside in mRNA + H2O = a 5'-end phospho-ribonucleoside in mRNA + NAD(+) + H(+). The catalysed reaction is a 5'-end NAD(+)-phospho-ribonucleoside in snoRNA + H2O = a 5'-end phospho-ribonucleoside in snoRNA + NAD(+) + H(+). It catalyses the reaction a 5'-end (N(7)-methyl 5'-triphosphoguanosine)-ribonucleoside-ribonucleotide in mRNA + H2O = a (N(7)-methyl 5'-triphosphoguanosine)-nucleoside + a 5'-end phospho-ribonucleoside in mRNA + H(+). The enzyme catalyses a 5'-end FAD-phospho-ribonucleoside in mRNA + H2O = a 5'-end phospho-ribonucleoside in mRNA + FAD + H(+). It carries out the reaction a 5'-end CoA-ribonucleoside in mRNA + H2O = 3'-dephospho-CoA + a 5'-end phospho-ribonucleoside in mRNA + H(+). Its activity is regulated as follows. The 5'-3' exoribonuclease activity is inhibited by adenosine 3',5'-bisphosphate. In terms of biological role, decapping enzyme for NAD-capped RNAs: specifically hydrolyzes the nicotinamide adenine dinucleotide (NAD) cap from a subset of RNAs by removing the entire NAD moiety from the 5'-end of an NAD-capped RNA. The NAD-cap is present at the 5'-end of some RNAs and snoRNAs. In contrast to the canonical 5'-end N7 methylguanosine (m7G) cap, the NAD cap promotes mRNA decay. Preferentially acts on NAD-capped transcripts in response to environmental stress. Also acts as a non-canonical decapping enzyme that removes the entire cap structure of m7G capped or incompletely capped RNAs and mediates their subsequent degradation. Specifically degrades pre-mRNAs with a defective 5'-end m7G cap and is part of a pre-mRNA capping quality control. Has decapping activity toward incomplete 5'-end m7G cap mRNAs such as unmethylated 5'-end-capped RNA (cap0), while it has no activity toward 2'-O-ribose methylated m7G cap (cap1). In contrast to canonical decapping enzymes DCP2 and NUDT16, which cleave the cap within the triphosphate linkage, the decapping activity releases the entire cap structure GpppN and a 5'-end monophosphate RNA. Also has 5'-3' exoribonuclease activities: The 5'-end monophosphate RNA is then degraded by the 5'-3' exoribonuclease activity, enabling this enzyme to decap and degrade incompletely capped mRNAs. Also possesses RNA 5'-pyrophosphohydrolase activity by hydrolyzing the 5'-end triphosphate to release pyrophosphates. Exhibits decapping activity towards FAD-capped RNAs. Exhibits decapping activity towards dpCoA-capped RNAs in vitro. In Mus musculus (Mouse), this protein is Decapping and exoribonuclease protein.